The chain runs to 184 residues: ATP synthase subunit b, chloroplastic (184 aa).

The chain crosses the membrane as a helical span at residues 31–53; it reads LINLGIVISLLIYFGKGVLSNLL.

This sequence belongs to the ATPase B chain family. In terms of assembly, F-type ATPases have 2 components, F(1) - the catalytic core - and F(0) - the membrane proton channel. F(1) has five subunits: alpha(3), beta(3), gamma(1), delta(1), epsilon(1). F(0) has four main subunits: a(1), b(1), b'(1) and c(10-14). The alpha and beta chains form an alternating ring which encloses part of the gamma chain. F(1) is attached to F(0) by a central stalk formed by the gamma and epsilon chains, while a peripheral stalk is formed by the delta, b and b' chains.

It localises to the plastid. It is found in the chloroplast thylakoid membrane. In terms of biological role, f(1)F(0) ATP synthase produces ATP from ADP in the presence of a proton or sodium gradient. F-type ATPases consist of two structural domains, F(1) containing the extramembraneous catalytic core and F(0) containing the membrane proton channel, linked together by a central stalk and a peripheral stalk. During catalysis, ATP synthesis in the catalytic domain of F(1) is coupled via a rotary mechanism of the central stalk subunits to proton translocation. Component of the F(0) channel, it forms part of the peripheral stalk, linking F(1) to F(0). In Aneura mirabilis (Parasitic liverwort), this protein is ATP synthase subunit b, chloroplastic.